A 695-amino-acid polypeptide reads, in one-letter code: Elongation factor G (695 aa).

The region spanning 9–283 (EKIRNIGIVA…AVIDYLPSPL (275 aa)) is the tr-type G domain. GTP-binding positions include 18–25 (AHIDAGKT), 82–86 (DTPGH), and 136–139 (NKMD).

The protein belongs to the TRAFAC class translation factor GTPase superfamily. Classic translation factor GTPase family. EF-G/EF-2 subfamily.

It is found in the cytoplasm. Functionally, catalyzes the GTP-dependent ribosomal translocation step during translation elongation. During this step, the ribosome changes from the pre-translocational (PRE) to the post-translocational (POST) state as the newly formed A-site-bound peptidyl-tRNA and P-site-bound deacylated tRNA move to the P and E sites, respectively. Catalyzes the coordinated movement of the two tRNA molecules, the mRNA and conformational changes in the ribosome. This is Elongation factor G from Petrotoga mobilis (strain DSM 10674 / SJ95).